The sequence spans 206 residues: Holliday junction branch migration complex subunit RuvA (206 aa).

The tract at residues 1–64 (MIGRLHGIII…EDAQLLYGFN (64 aa)) is domain I. The tract at residues 65-143 (TRQERTLFRE…GWISHDLFTP (79 aa)) is domain II. Positions 144 to 157 (YTDAAPVDHEPSLA) are flexible linker. Residues 158 to 206 (PADTVESEAVAALLALGYKPQQASLVVSKVIKPEMTVENVIREALRSML) form a domain III region.

It belongs to the RuvA family. Homotetramer. Forms an RuvA(8)-RuvB(12)-Holliday junction (HJ) complex. HJ DNA is sandwiched between 2 RuvA tetramers; dsDNA enters through RuvA and exits via RuvB. An RuvB hexamer assembles on each DNA strand where it exits the tetramer. Each RuvB hexamer is contacted by two RuvA subunits (via domain III) on 2 adjacent RuvB subunits; this complex drives branch migration. In the full resolvosome a probable DNA-RuvA(4)-RuvB(12)-RuvC(2) complex forms which resolves the HJ.

The protein localises to the cytoplasm. Functionally, the RuvA-RuvB-RuvC complex processes Holliday junction (HJ) DNA during genetic recombination and DNA repair, while the RuvA-RuvB complex plays an important role in the rescue of blocked DNA replication forks via replication fork reversal (RFR). RuvA specifically binds to HJ cruciform DNA, conferring on it an open structure. The RuvB hexamer acts as an ATP-dependent pump, pulling dsDNA into and through the RuvAB complex. HJ branch migration allows RuvC to scan DNA until it finds its consensus sequence, where it cleaves and resolves the cruciform DNA. This is Holliday junction branch migration complex subunit RuvA from Tolumonas auensis (strain DSM 9187 / NBRC 110442 / TA 4).